The sequence spans 313 residues: Protein FixB (313 aa).

255–283 (LYLAVGISGQIQHMVGANASQTIFAINKD) serves as a coordination point for FAD.

Belongs to the ETF alpha-subunit/FixB family. As to quaternary structure, heterodimer of FixA and FixB.

It functions in the pathway amine and polyamine metabolism; carnitine metabolism. Required for anaerobic carnitine reduction. May bring reductant to CaiA. This is Protein FixB from Escherichia coli O127:H6 (strain E2348/69 / EPEC).